The primary structure comprises 324 residues: Lignin-forming anionic peroxidase (324 aa).

Residues 1 to 22 (MSFLRFVGAILFLVAIFGASNA) form the signal peptide. Position 23 is a pyrrolidone carboxylic acid (Q23). Cystine bridges form between C33-C111, C66-C71, C117-C320, and C196-C228. N35 carries N-linked (GlcNAc...) asparagine glycosylation. H64 acts as the Proton acceptor in catalysis. Ca(2+) contacts are provided by D65, V68, G70, D72, and S74. An N-linked (GlcNAc...) asparagine glycan is attached at N150. P159 is a substrate binding site. Residue H189 coordinates heme b. Residue T190 coordinates Ca(2+). N207 carries an N-linked (GlcNAc...) asparagine glycan. D242, T245, and D250 together coordinate Ca(2+).

This sequence belongs to the peroxidase family. Classical plant (class III) peroxidase subfamily. Ca(2+) serves as cofactor. Requires heme b as cofactor.

The protein localises to the secreted. It catalyses the reaction 2 a phenolic donor + H2O2 = 2 a phenolic radical donor + 2 H2O. Functionally, removal of H(2)O(2), oxidation of toxic reductants, biosynthesis and degradation of lignin, suberization, auxin catabolism, response to environmental stresses such as wounding, pathogen attack and oxidative stress. These functions might be dependent on each isozyme/isoform in each plant tissue. In terms of biological role, plays an integral role in secondary cell wall biosynthesis by the polymerization of cinnamyl alcohols into lignin and by forming rigid cross-links between cellulose, pectin, hydroxy-proline-rich glycoproteins, and lignin. This Nicotiana tabacum (Common tobacco) protein is Lignin-forming anionic peroxidase.